We begin with the raw amino-acid sequence, 918 residues long: Melanoma-associated antigen E1 (918 aa).

3 disordered regions span residues 1–140, 154–227, and 367–388; these read MSLV…GSKA, EQRH…SNGL, and SQMS…ANNP. Over residues 8 to 23 the composition is skewed to basic residues; sequence SRRRRGGRANARRNNG. 3 stretches are compositionally biased toward polar residues: residues 70-96, 113-126, and 213-227; these read VPPT…SEMP, GLNT…SEGP, and EDPS…SNGL. MAGE domains are found at residues 459–658 and 706–897; these read MEQN…YNEA and LESK…YREA. Positions 704–918 are interaction with DTNA; sequence SRLESKARKL…RRPLIVRNLR (215 aa).

In terms of assembly, interacts with DTNA. Interacts with TRIM28. As to expression, expressed in cell bodies and dendrites of hippocampal and Purkinje neurons. Also expressed in peripheral nerve, where it localizes to the perineurium and myelin (at protein level). Predominantly expressed in brain and at low levels in the heart, liver, kidney, spleen, testis, lung, thymus, placenta and skeletal muscle.

It is found in the cytoplasm. The protein resides in the perinuclear region. Its subcellular location is the nucleus. It localises to the cell membrane. May enhance ubiquitin ligase activity of RING-type zinc finger-containing E3 ubiquitin-protein ligases. Proposed to act through recruitment and/or stabilization of the Ubl-conjugating enzyme (E2) at the E3:substrate complex. The polypeptide is Melanoma-associated antigen E1 (Magee1) (Mus musculus (Mouse)).